Reading from the N-terminus, the 153-residue chain is Peritrophin-1 (153 aa).

Residues 1 to 17 (MKVSASLVLLLAAAVLA) form the signal peptide. Chitin-binding type-2 domains follow at residues 18-79 (DDRC…QCAP) and 92-153 (SPNC…QCEE). 2 disulfides stabilise this stretch: Cys-56–Cys-69 and Cys-130–Cys-143. The N-linked (GlcNAc...) asparagine glycan is linked to Asn-63.

In terms of processing, glycosylated. As to expression, adult peritrophic membrane.

Its function is as follows. Binds chitin but not cellulose. May be involved in the spatial organization of PM. This Anopheles gambiae (African malaria mosquito) protein is Peritrophin-1 (Aper1).